The primary structure comprises 625 residues: tRNA uridine 5-carboxymethylaminomethyl modification enzyme MnmG (625 aa).

Residues 10–15, V122, and S177 contribute to the FAD site; that span reads GGGHAG. 271–285 serves as a coordination point for NAD(+); it reads GPRYCPSIEDKVNRF. Q368 is a binding site for FAD.

Belongs to the MnmG family. In terms of assembly, homodimer. Heterotetramer of two MnmE and two MnmG subunits. It depends on FAD as a cofactor.

The protein localises to the cytoplasm. Its function is as follows. NAD-binding protein involved in the addition of a carboxymethylaminomethyl (cmnm) group at the wobble position (U34) of certain tRNAs, forming tRNA-cmnm(5)s(2)U34. This is tRNA uridine 5-carboxymethylaminomethyl modification enzyme MnmG from Wolinella succinogenes (strain ATCC 29543 / DSM 1740 / CCUG 13145 / JCM 31913 / LMG 7466 / NCTC 11488 / FDC 602W) (Vibrio succinogenes).